Here is a 351-residue protein sequence, read N- to C-terminus: Ion-translocating oxidoreductase complex subunit D (351 aa).

The next 4 helical transmembrane spans lie at 18-38, 42-62, 87-107, and 121-141; these read IMLL…YFFG, LIQV…VLHL, LPPL…IIIA, and PAMV…TSWL. Thr-185 bears the FMN phosphoryl threonine mark. The next 5 helical transmembrane spans lie at 212–232, 241–261, 264–284, 298–318, and 320–340; these read LAGI…LLLL, IPVS…MIAP, FAPP…FFIA, LIFG…GGYP, and GVAF…HYTQ.

It belongs to the NqrB/RnfD family. The complex is composed of six subunits: RnfA, RnfB, RnfC, RnfD, RnfE and RnfG. The cofactor is FMN.

It is found in the cell inner membrane. Part of a membrane-bound complex that couples electron transfer with translocation of ions across the membrane. The polypeptide is Ion-translocating oxidoreductase complex subunit D (Yersinia enterocolitica serotype O:8 / biotype 1B (strain NCTC 13174 / 8081)).